The sequence spans 218 residues: Trichothecene biosynthesis transcription regulator TRI6 (218 aa).

Positions 154–181 (SQSTNDPGDAGKKGFATRKDRARHEAKH) are disordered. Residues 162–176 (DAGKKGFATRKDRAR) are compositionally biased toward basic and acidic residues. A C2H2-type zinc finger spans residues 185 to 215 (IRCQWRDNNGDQCTRTFSRMDNMRDHFRRIH).

It is found in the nucleus. In terms of biological role, transcriptional activator of part of the trichothecene biosynthesis cluster that mediates the production of the antimicrobial trichothecene harzianum A (HA) that plays a role in Botrytis cinerea antagonistic activity and plant defense priming. Regulates expression of both trichothecene and mevalonate pathway genes. The protein is Trichothecene biosynthesis transcription regulator TRI6 of Trichoderma arundinaceum.